The primary structure comprises 131 residues: GATA zinc finger domain-containing protein 2 (131 aa).

The span at 21-55 (STATDATSADGAASETDAASATDTTSATDPTSATD) shows a compositional bias: low complexity. A disordered region spans residues 21-85 (STATDATSAD…RGRPYISTPP (65 aa)). The span at 57-74 (IATTNTTGITSSGPTTNG) shows a compositional bias: polar residues. Residues 88-115 (CYDCGRTRSPYWRKGTYNGQVVHLCNAC) form a GATA-type zinc finger.

The chain is GATA zinc finger domain-containing protein 2 (comH) from Dictyostelium discoideum (Social amoeba).